The following is a 454-amino-acid chain: Anthocyanidin 3-O-galactosyltransferase 3GT6 (454 aa).

Residues 1-21 form the signal peptide; it reads MTNSSKGRHVAVLPFPFSTHA. An anthocyanidin is bound by residues Ser-18 and His-20. The active-site Proton acceptor is His-20. The Charge relay role is filled by Asp-117. His-148 contributes to the an anthocyanidin binding site. Positions 331, 333, 348, 351, 352, 353, and 356 each coordinate UDP-alpha-D-glucose. Gly-371 is a binding site for an anthocyanidin. Position 372 (Asp-372) interacts with UDP-alpha-D-glucose. N-linked (GlcNAc...) asparagine glycosylation is present at Asn-441.

Belongs to the UDP-glycosyltransferase family. As to quaternary structure, monomer. As to expression, mostly expressed in leaves and flowers and, to a lower extent, in roots. In flowers, mainly observed in petals, stamens and scapes, and at lower levels in pistils and toruses.

The catalysed reaction is cyanidin + UDP-alpha-D-galactose = cyanidin 3-O-beta-D-galactoside + UDP + H(+). The enzyme catalyses cyanidin + UDP-alpha-D-glucose = cyanidin 3-O-beta-D-glucoside + UDP + H(+). It catalyses the reaction delphinidin + UDP-alpha-D-glucose = delphinidin 3-O-beta-D-glucoside + UDP. It carries out the reaction peonidin + UDP-alpha-D-glucose = peonidin 3-O-beta-D-glucoside + UDP. The catalysed reaction is pelargonidin + UDP-alpha-D-glucose = pelargonidin 3-O-beta-D-glucoside + UDP. The enzyme catalyses delphinidin + UDP-alpha-D-galactose = delphinidin 3-O-beta-D-galactoside + UDP + H(+). It catalyses the reaction pelargonidin + UDP-alpha-D-galactose = pelargonidin 3-O-beta-D-galactoside betaine + UDP. It carries out the reaction peonidin + UDP-alpha-D-galactose = peonidin 3-O-beta-D-galactoside + UDP. The catalysed reaction is petunidin + UDP-alpha-D-galactose = petunidin 3-O-beta-D-galactoside + UDP. The enzyme catalyses petunidin + UDP-alpha-D-glucose = petunidin 3-O-beta-D-glucoside + UDP. It catalyses the reaction an anthocyanidin + UDP-alpha-D-glucose + H(+) = an anthocyanidin 3-O-beta-D-glucoside + UDP. It carries out the reaction an anthocyanidin + UDP-alpha-D-galactose = an anthocyanidin 3-O-beta-D-galactoside + UDP. Its pathway is pigment biosynthesis; anthocyanin biosynthesis. Functionally, flavonoid 3-O-glycosyltransferase involved in the biosynthesis of anthocyanins conferring flower red/pink colors, mainly anthocyanidin 3-O-glycosides. Catalyzes the addition of UDP-sugar to the 3-OH of anthocyanidin, with a preference for UDP-galactose (UDP-Gal) as sugar donor and cyanidin as substrate; able to use delphinidin, pelargonidin, peonidin and petunidin as substrates in the presence of UDP-Gal, but barely active on malvidin. Can also use UDP-glucose (UDP-Glu) as sugar donor with cyanidin, delphinidin, pelargonidin, peonidin and petunidin as substrates, but not active on malvidin. In Rhododendron delavayi (Rhododendron), this protein is Anthocyanidin 3-O-galactosyltransferase 3GT6.